A 283-amino-acid polypeptide reads, in one-letter code: 3-methyl-2-oxobutanoate hydroxymethyltransferase (283 aa).

Residues Asp44 and Asp83 each contribute to the Mg(2+) site. 3-methyl-2-oxobutanoate is bound by residues 44–45 (DS), Asp83, and Lys112. Glu114 contributes to the Mg(2+) binding site. Residue Glu181 is the Proton acceptor of the active site.

The protein belongs to the PanB family. Homodecamer; pentamer of dimers. Mg(2+) serves as cofactor.

Its subcellular location is the cytoplasm. The catalysed reaction is 3-methyl-2-oxobutanoate + (6R)-5,10-methylene-5,6,7,8-tetrahydrofolate + H2O = 2-dehydropantoate + (6S)-5,6,7,8-tetrahydrofolate. The protein operates within cofactor biosynthesis; coenzyme A biosynthesis. Its function is as follows. Catalyzes the reversible reaction in which hydroxymethyl group from 5,10-methylenetetrahydrofolate is transferred onto alpha-ketoisovalerate to form ketopantoate. The chain is 3-methyl-2-oxobutanoate hydroxymethyltransferase from Pyrococcus furiosus (strain ATCC 43587 / DSM 3638 / JCM 8422 / Vc1).